The sequence spans 60 residues: Short neurotoxin 1 (60 aa).

4 cysteine pairs are disulfide-bonded: Cys-3–Cys-22, Cys-17–Cys-39, Cys-41–Cys-52, and Cys-53–Cys-58.

Belongs to the three-finger toxin family. Short-chain subfamily. Type I alpha-neurotoxin sub-subfamily. Expressed by the venom gland.

The protein localises to the secreted. Functionally, binds to muscle nicotinic acetylcholine receptor (nAChR) and inhibit acetylcholine from binding to the receptor, thereby impairing neuromuscular transmission. The polypeptide is Short neurotoxin 1 (Dendroaspis viridis (Western green mamba)).